A 349-amino-acid polypeptide reads, in one-letter code: S-adenosylmethionine:tRNA ribosyltransferase-isomerase (349 aa).

This sequence belongs to the QueA family. Monomer.

It is found in the cytoplasm. The enzyme catalyses 7-aminomethyl-7-carbaguanosine(34) in tRNA + S-adenosyl-L-methionine = epoxyqueuosine(34) in tRNA + adenine + L-methionine + 2 H(+). The protein operates within tRNA modification; tRNA-queuosine biosynthesis. Functionally, transfers and isomerizes the ribose moiety from AdoMet to the 7-aminomethyl group of 7-deazaguanine (preQ1-tRNA) to give epoxyqueuosine (oQ-tRNA). In Azotobacter vinelandii (strain DJ / ATCC BAA-1303), this protein is S-adenosylmethionine:tRNA ribosyltransferase-isomerase.